The chain runs to 991 residues: Phosphate metabolism protein 7 (991 aa).

Residues 1–9 (MADSSSTSA) are Extracellular-facing. Residues 10–30 (FISTLIIYGLTAVVFVWLFLL) traverse the membrane as a helical segment. Topologically, residues 31–91 (LRPKNRRVYE…TSVDGYFLLR (61 aa)) are cytoplasmic. The helical transmembrane segment at 92–112 (YIGIVGSLSFVGCLLLLPILL) threads the bilayer. The Extracellular segment spans residues 113–138 (PVNATNGNNLQGFELLSFSNVTNKNR). Asparagine 115 and asparagine 132 each carry an N-linked (GlcNAc...) asparagine glycan. A helical transmembrane segment spans residues 139 to 159 (FYAHVFLSWIFFGLFTYVIYK). Residues 160-388 (ELYYYVVFRH…ERHSRRAVAN (229 aa)) lie on the Cytoplasmic side of the membrane. The helical transmembrane segment at 389-409 (TIMVLLIIFWAFPVAVVGIIS) threads the bilayer. Topologically, residues 410 to 437 (NVNFLTDKVPFLRFINNMPTFLMGVITG) are extracellular. The chain crosses the membrane as a helical span at residues 438–458 (LLPTIALVVLMSLVPPFIVML). Residues 459–471 (GKLSGCVTRQETD) lie on the Cytoplasmic side of the membrane. Residues 472–492 (LYSQAWYYAFAVIQIFLVVTA) form a helical membrane-spanning segment. Over 493–523 (TSSASSTVDSIIDRPRSAMTLLANNLPKASN) the chain is Extracellular. Residues 524–544 (FYIMYFILKGLTGPTWTILQA) traverse the membrane as a helical segment. Over 545 to 582 (VNLLLSKVLGRVLDSTPRQKWNRYNTLATPRMGIVYPG) the chain is Cytoplasmic. The helical transmembrane segment at 583–603 (IEILVCIYICYSIIAPILLFF) threads the bilayer. Position 604 (serine 604) is a topological domain, extracellular. The chain crosses the membrane as a helical span at residues 605-625 (TVMLTLLYVAYLYNLNYVFGF). At 626 to 637 (SFDLKGRNYPRA) the chain is on the cytoplasmic side. Residues 638–658 (LFQIFVGIYLSEVCLLGLFIM) traverse the membrane as a helical segment. The Extracellular segment spans residues 659 to 661 (AKT). The chain crosses the membrane as a helical span at residues 662–682 (WGPLVLEVFWIVVTALAHIYM). Residues 683 to 991 (KRKFIPLFDA…PPDYEPEAKK (309 aa)) lie on the Cytoplasmic side of the membrane. The interval 749 to 787 (KANLIPDNDGSSENGTPSNPFESGSERASLSGSNAESDS) is disordered. Polar residues predominate over residues 757–785 (DGSSENGTPSNPFESGSERASLSGSNAES).

This sequence belongs to the CSC1 (TC 1.A.17) family.

The protein localises to the cell membrane. Acts as an osmosensitive calcium-permeable cation channel. The polypeptide is Phosphate metabolism protein 7 (PHM7) (Saccharomyces cerevisiae (strain ATCC 204508 / S288c) (Baker's yeast)).